The sequence spans 347 residues: Protein RecA (347 aa).

80-87 (GPESSGKT) is a binding site for ATP.

It belongs to the RecA family.

The protein resides in the cytoplasm. Its function is as follows. Can catalyze the hydrolysis of ATP in the presence of single-stranded DNA, the ATP-dependent uptake of single-stranded DNA by duplex DNA, and the ATP-dependent hybridization of homologous single-stranded DNAs. It interacts with LexA causing its activation and leading to its autocatalytic cleavage. This chain is Protein RecA, found in Chlorobaculum parvum (strain DSM 263 / NCIMB 8327) (Chlorobium vibrioforme subsp. thiosulfatophilum).